Reading from the N-terminus, the 319-residue chain is Ataxin-3 homolog (319 aa).

Positions 8–179 (ISSIFFERQQ…NSEADDFITL (172 aa)) constitute a Josephin domain. The active-site Nucleophile is Cys-21. His-118 functions as the Proton acceptor in the catalytic mechanism. Asn-133 is a catalytic residue. UIM domains follow at residues 218–237 (QEDR…KESS) and 242–261 (SDED…DPNI). The interval 253–319 (MSLSQDPNIP…EKKSQNVPEE (67 aa)) is disordered. Residues 254-267 (SLSQDPNIPSTSAA) show a composition bias toward polar residues. The span at 295 to 313 (QQRRDRAKFLEKLEEEKKS) shows a compositional bias: basic and acidic residues. The interval 297–300 (RRDR) is interaction with cdc-48.1 and cdc-48.2.

In terms of assembly, forms a complex composed of deubiquitinating enzyme atx-3, adapter ubxn-5 and cdc-48.1. Forms a complex composed of deubiquitinating enzyme atx-3, E4 ubiquitin-protein ligase ufd-2 and cdc-48.1. Interacts (via RRDR motif) with cdc-48.1 (via N-terminus) and cdc-48.2 (via N-terminus); the interaction with cdc-48.1 is not required for atx-3 enzymatic activity. Interacts (via C-terminus) with ubxn-5. May interact with ned-8.

The protein localises to the cytoplasm. It localises to the nucleus. It is found in the nucleolus. The catalysed reaction is Thiol-dependent hydrolysis of ester, thioester, amide, peptide and isopeptide bonds formed by the C-terminal Gly of ubiquitin (a 76-residue protein attached to proteins as an intracellular targeting signal).. Its function is as follows. Acts as a chain editing deubiquitinating enzyme that binds and cleaves 'Lys-48'-linked polyubiquitin chains, with a preference for chains containing four or more ubiquitin molecules thereby modulating protein degradation by the ubiquitin-proteasome pathway. Probably by regulating the IGF-1-insulin-like pathway, regulates lifespan. Regulates germline DNA double-strand-break repair and apoptosis in response to DNA damage by recruiting E4 ubiquitin-protein ligase ufd-2 to DNA repair foci. Interacts with key regulators of transcription and represses transcription. Acts as a histone-binding protein that regulates transcription. This Caenorhabditis briggsae protein is Ataxin-3 homolog.